The primary structure comprises 302 residues: Meiotically up-regulated gene 129 protein (302 aa).

Has a role in meiosis. This is Meiotically up-regulated gene 129 protein (mug129) from Schizosaccharomyces pombe (strain 972 / ATCC 24843) (Fission yeast).